Consider the following 439-residue polypeptide: Ribosomal protein uS12 methylthiotransferase RimO (439 aa).

The 113-residue stretch at 5–117 (KKLHLISLGC…IDELIASKQS (113 aa)) folds into the MTTase N-terminal domain. [4Fe-4S] cluster-binding residues include C14, C48, C80, C149, C153, and C156. One can recognise a Radical SAM core domain in the interval 135–363 (TGSNYHAYIK…GEIAERSTLR (229 aa)). One can recognise a TRAM domain in the interval 366 to 437 (EKMVGKTVEL…GMQLLATLIK (72 aa)).

The protein belongs to the methylthiotransferase family. RimO subfamily. Requires [4Fe-4S] cluster as cofactor.

It localises to the cytoplasm. It carries out the reaction L-aspartate(89)-[ribosomal protein uS12]-hydrogen + (sulfur carrier)-SH + AH2 + 2 S-adenosyl-L-methionine = 3-methylsulfanyl-L-aspartate(89)-[ribosomal protein uS12]-hydrogen + (sulfur carrier)-H + 5'-deoxyadenosine + L-methionine + A + S-adenosyl-L-homocysteine + 2 H(+). In terms of biological role, catalyzes the methylthiolation of an aspartic acid residue of ribosomal protein uS12. In Sulfurovum sp. (strain NBC37-1), this protein is Ribosomal protein uS12 methylthiotransferase RimO.